The chain runs to 245 residues: Biosynthetic peptidoglycan transglycosylase (245 aa).

Residues 13–35 form a helical membrane-spanning segment; the sequence is VGLARWIVYAGSVFAGAWLATQL.

Belongs to the glycosyltransferase 51 family.

The protein localises to the cell inner membrane. The catalysed reaction is [GlcNAc-(1-&gt;4)-Mur2Ac(oyl-L-Ala-gamma-D-Glu-L-Lys-D-Ala-D-Ala)](n)-di-trans,octa-cis-undecaprenyl diphosphate + beta-D-GlcNAc-(1-&gt;4)-Mur2Ac(oyl-L-Ala-gamma-D-Glu-L-Lys-D-Ala-D-Ala)-di-trans,octa-cis-undecaprenyl diphosphate = [GlcNAc-(1-&gt;4)-Mur2Ac(oyl-L-Ala-gamma-D-Glu-L-Lys-D-Ala-D-Ala)](n+1)-di-trans,octa-cis-undecaprenyl diphosphate + di-trans,octa-cis-undecaprenyl diphosphate + H(+). It participates in cell wall biogenesis; peptidoglycan biosynthesis. Functionally, peptidoglycan polymerase that catalyzes glycan chain elongation from lipid-linked precursors. In Burkholderia vietnamiensis (strain G4 / LMG 22486) (Burkholderia cepacia (strain R1808)), this protein is Biosynthetic peptidoglycan transglycosylase.